A 254-amino-acid polypeptide reads, in one-letter code: 5'-nucleotidase SurE (254 aa).

Asp-8, Asp-9, Ser-39, and Asn-91 together coordinate a divalent metal cation.

This sequence belongs to the SurE nucleotidase family. Requires a divalent metal cation as cofactor.

Its subcellular location is the cytoplasm. The catalysed reaction is a ribonucleoside 5'-phosphate + H2O = a ribonucleoside + phosphate. In terms of biological role, nucleotidase that shows phosphatase activity on nucleoside 5'-monophosphates. The sequence is that of 5'-nucleotidase SurE from Pseudoalteromonas translucida (strain TAC 125).